The following is a 364-amino-acid chain: Methylthioribose-1-phosphate isomerase (364 aa).

Residues 49–51 (RGA), R89, and Q201 each bind substrate. D242 functions as the Proton donor in the catalytic mechanism. 252–253 (NK) is a binding site for substrate.

This sequence belongs to the eIF-2B alpha/beta/delta subunits family. MtnA subfamily.

The enzyme catalyses 5-(methylsulfanyl)-alpha-D-ribose 1-phosphate = 5-(methylsulfanyl)-D-ribulose 1-phosphate. Its pathway is amino-acid biosynthesis; L-methionine biosynthesis via salvage pathway; L-methionine from S-methyl-5-thio-alpha-D-ribose 1-phosphate: step 1/6. Functionally, catalyzes the interconversion of methylthioribose-1-phosphate (MTR-1-P) into methylthioribulose-1-phosphate (MTRu-1-P). This Leptospira interrogans serogroup Icterohaemorrhagiae serovar Lai (strain 56601) protein is Methylthioribose-1-phosphate isomerase.